The sequence spans 68 residues: Small ribosomal subunit protein bS21 (68 aa).

The disordered stretch occupies residues 39-68 (PPSVKRVRKKQESERRHRKERAMRRRMMEE). Basic residues predominate over residues 54 to 68 (RHRKERAMRRRMMEE).

This sequence belongs to the bacterial ribosomal protein bS21 family.

This chain is Small ribosomal subunit protein bS21, found in Orientia tsutsugamushi (strain Ikeda) (Rickettsia tsutsugamushi).